Here is an 88-residue protein sequence, read N- to C-terminus: Protein transport protein Sec61 subunit beta (88 aa).

The segment at 1-41 (MDSSVPGGQRTLQKRRNAQLQKEKKANQTPASPRQAGFGGS) is disordered. Residues 1–60 (MDSSVPGGQRTLQKRRNAQLQKEKKANQTPASPRQAGFGGSSSSILKLYTDEANGLRVDP) are Cytoplasmic-facing. A helical membrane pass occupies residues 61 to 81 (LVVLFLAVAFVFSVVALHVVA).

This sequence belongs to the SEC61-beta family. In terms of assembly, heterotrimeric complex composed of SEC61, SEB1 and SSS1.

The protein localises to the endoplasmic reticulum membrane. Necessary for protein translocation in the endoplasmic reticulum. The chain is Protein transport protein Sec61 subunit beta (SBH1) from Kluyveromyces lactis (strain ATCC 8585 / CBS 2359 / DSM 70799 / NBRC 1267 / NRRL Y-1140 / WM37) (Yeast).